The following is a 362-amino-acid chain: O-methyltransferase 13 (362 aa).

S-adenosyl-L-homocysteine-binding residues include S181, G205, D228, D248, and K262. Residue D228 coordinates S-adenosyl-L-methionine. The active-site Proton acceptor is H266.

It belongs to the class I-like SAM-binding methyltransferase superfamily. Cation-independent O-methyltransferase family. As to quaternary structure, homodimer. As to expression, mainly expressed in vascular and cortical tissues.

The catalysed reaction is dopamine + S-adenosyl-L-methionine = 3-methoxytyramine + S-adenosyl-L-homocysteine + H(+). Its pathway is aromatic compound metabolism. It functions in the pathway alkaloid biosynthesis. Functionally, O-methyltransferase participating in the biosynthesis of natural products derived from phenylethylamine, including mescaline, a natural hallucinogen potentially used in psychotherapeutic treatments. Catalyzes the O-methylation of dopamine and 4,5-dihydroxy-3-methoxyphenethylamine. The protein is O-methyltransferase 13 of Lophophora williamsii (Peyote).